Reading from the N-terminus, the 191-residue chain is Peptidyl-tRNA hydrolase (191 aa).

Tyr-16 is a binding site for tRNA. His-21 functions as the Proton acceptor in the catalytic mechanism. Residues Tyr-67, Asn-69, and Asn-115 each coordinate tRNA.

Belongs to the PTH family. Monomer.

Its subcellular location is the cytoplasm. It catalyses the reaction an N-acyl-L-alpha-aminoacyl-tRNA + H2O = an N-acyl-L-amino acid + a tRNA + H(+). In terms of biological role, hydrolyzes ribosome-free peptidyl-tRNAs (with 1 or more amino acids incorporated), which drop off the ribosome during protein synthesis, or as a result of ribosome stalling. Functionally, catalyzes the release of premature peptidyl moieties from peptidyl-tRNA molecules trapped in stalled 50S ribosomal subunits, and thus maintains levels of free tRNAs and 50S ribosomes. In Wigglesworthia glossinidia brevipalpis, this protein is Peptidyl-tRNA hydrolase.